A 58-amino-acid chain; its full sequence is uncharacterized protein (58 aa).

The next 2 membrane-spanning stretches (helical) occupy residues 7–27 (IFDI…VAKT) and 29–49 (YGTG…AYKI).

The protein resides in the cell membrane. This is an uncharacterized protein from Bacillus subtilis (strain 168).